The following is a 179-amino-acid chain: Peptidyl-prolyl cis-trans isomerase H (179 aa).

Positions Phe16 to Glu178 constitute a PPIase cyclophilin-type domain.

It belongs to the cyclophilin-type PPIase family. PPIase H subfamily.

Its subcellular location is the nucleus. The enzyme catalyses [protein]-peptidylproline (omega=180) = [protein]-peptidylproline (omega=0). Its function is as follows. PPIases accelerate the folding of proteins. It catalyzes the cis-trans isomerization of proline imidic peptide bonds in oligopeptides. The protein is Peptidyl-prolyl cis-trans isomerase H (CYP3) of Cryptococcus neoformans var. neoformans serotype D (strain B-3501A) (Filobasidiella neoformans).